Reading from the N-terminus, the 283-residue chain is Acetylglutamate kinase (283 aa).

Substrate is bound by residues 63-64 (GG), Arg-85, and Asn-178.

The protein belongs to the acetylglutamate kinase family. ArgB subfamily.

The protein resides in the cytoplasm. The enzyme catalyses N-acetyl-L-glutamate + ATP = N-acetyl-L-glutamyl 5-phosphate + ADP. The protein operates within amino-acid biosynthesis; L-arginine biosynthesis; N(2)-acetyl-L-ornithine from L-glutamate: step 2/4. Functionally, catalyzes the ATP-dependent phosphorylation of N-acetyl-L-glutamate. In Prochlorococcus marinus (strain MIT 9312), this protein is Acetylglutamate kinase.